A 231-amino-acid chain; its full sequence is Ribosyldihydronicotinamide dehydrogenase [quinone] (231 aa).

FAD-binding positions include histidine 12 and phenylalanine 18–serine 21. Serine 80 carries the phosphoserine modification. Leucine 104–phenylalanine 107 provides a ligand contact to FAD. Residue phenylalanine 127–isoleucine 129 participates in substrate binding. FAD is bound by residues threonine 148–glycine 151 and tyrosine 156. Zn(2+) contacts are provided by histidine 174 and histidine 178. Glutamate 194 serves as a coordination point for FAD. Position 197 is a phosphoserine (serine 197). Residue arginine 201 participates in FAD binding. Cysteine 223 serves as a coordination point for Zn(2+).

The protein belongs to the NAD(P)H dehydrogenase (quinone) family. As to quaternary structure, homodimer. Requires Zn(2+) as cofactor. FAD serves as cofactor.

It localises to the cytoplasm. The catalysed reaction is 1-(beta-D-ribofuranosyl)-1,4-dihydronicotinamide + a quinone + H(+) = beta-nicotinamide D-riboside + a quinol. The enzyme apparently serves as a quinone reductase in connection with conjugation reactions of hydroquinones involved in detoxification pathways as well as in biosynthetic processes such as the vitamin K-dependent gamma-carboxylation of glutamate residues in prothrombin synthesis. This chain is Ribosyldihydronicotinamide dehydrogenase [quinone] (NQO2), found in Pongo abelii (Sumatran orangutan).